The following is an 815-amino-acid chain: Lon protease 1 (815 aa).

The 194-residue stretch at 12–205 folds into the Lon N-terminal domain; that stretch reads VFVLALRDVV…HILKTIETEI (194 aa). 358–365 provides a ligand contact to ATP; the sequence is GPPGVGKT. In terms of domain architecture, Lon proteolytic spans 594 to 775; sequence TNQIGQVAGL…DEVFKIALES (182 aa). Residues serine 681 and lysine 724 contribute to the active site.

This sequence belongs to the peptidase S16 family. Homohexamer. Organized in a ring with a central cavity.

The protein localises to the cytoplasm. The catalysed reaction is Hydrolysis of proteins in presence of ATP.. Its function is as follows. ATP-dependent serine protease that mediates the selective degradation of mutant and abnormal proteins as well as certain short-lived regulatory proteins. Required for cellular homeostasis and for survival from DNA damage and developmental changes induced by stress. Degrades polypeptides processively to yield small peptide fragments that are 5 to 10 amino acids long. Binds to DNA in a double-stranded, site-specific manner. The sequence is that of Lon protease 1 from Hydrogenovibrio crunogenus (strain DSM 25203 / XCL-2) (Thiomicrospira crunogena).